Consider the following 187-residue polypeptide: Peptidyl-tRNA hydrolase (187 aa).

TRNA is bound at residue Y18. Residue H23 is the Proton acceptor of the active site. The tRNA site is built by F65, N67, and N113.

Belongs to the PTH family. Monomer.

The protein localises to the cytoplasm. The catalysed reaction is an N-acyl-L-alpha-aminoacyl-tRNA + H2O = an N-acyl-L-amino acid + a tRNA + H(+). Hydrolyzes ribosome-free peptidyl-tRNAs (with 1 or more amino acids incorporated), which drop off the ribosome during protein synthesis, or as a result of ribosome stalling. Functionally, catalyzes the release of premature peptidyl moieties from peptidyl-tRNA molecules trapped in stalled 50S ribosomal subunits, and thus maintains levels of free tRNAs and 50S ribosomes. The protein is Peptidyl-tRNA hydrolase of Coxiella burnetii (strain CbuK_Q154) (Coxiella burnetii (strain Q154)).